Consider the following 207-residue polypeptide: Large ribosomal subunit protein uL4 (207 aa).

This sequence belongs to the universal ribosomal protein uL4 family. Part of the 50S ribosomal subunit.

In terms of biological role, one of the primary rRNA binding proteins, this protein initially binds near the 5'-end of the 23S rRNA. It is important during the early stages of 50S assembly. It makes multiple contacts with different domains of the 23S rRNA in the assembled 50S subunit and ribosome. Forms part of the polypeptide exit tunnel. In Rickettsia africae (strain ESF-5), this protein is Large ribosomal subunit protein uL4.